Here is a 200-residue protein sequence, read N- to C-terminus: Large ribosomal subunit protein uL4 (200 aa).

The tract at residues 44–70 (AQKTRAEVTGSGKKPWRQKGTGRARSG) is disordered.

The protein belongs to the universal ribosomal protein uL4 family. As to quaternary structure, part of the 50S ribosomal subunit.

In terms of biological role, one of the primary rRNA binding proteins, this protein initially binds near the 5'-end of the 23S rRNA. It is important during the early stages of 50S assembly. It makes multiple contacts with different domains of the 23S rRNA in the assembled 50S subunit and ribosome. Functionally, protein L4 is a both a transcriptional repressor and a translational repressor protein. It regulates transcription of the S10 operon (to which L4 belongs) by causing premature termination of transcription within the S10 leader. L4 controls the translation of the S10 operon by binding to its mRNA. Its function is as follows. This protein when expressed in E.coli represses both transcription and translation of the endogenous S10 operon. As the M.morganii S10 leader can be regulated in vitro by the E.coli L4 protein this strongly suggests the endogenous protein controls its own S10 operon in a similar fashion. Forms part of the polypeptide exit tunnel. The chain is Large ribosomal subunit protein uL4 (rplD) from Morganella morganii (Proteus morganii).